The primary structure comprises 637 residues: Probable ATP-binding protein YheS (637 aa).

2 ABC transporter domains span residues 2 to 246 (IVFS…AQQQ) and 313 to 527 (LKME…KQEN). ATP contacts are provided by residues 34 to 41 (GKNGCGKS) and 345 to 352 (GRNGAGKS). The disordered stretch occupies residues 523-559 (QKQENQTDEAPKENANSAQARKDQKRREAELRAQTQP). A compositionally biased stretch (basic and acidic residues) spans 542–553 (ARKDQKRREAEL).

This sequence belongs to the ABC transporter superfamily. ABCF family. YheS subfamily.

In terms of biological role, genetic data indicate it may be involved in ribosome assembly or function. Ectopic expression exacerbates the cold-sensitive growth phenotype of a bipA deletion. This chain is Probable ATP-binding protein YheS (yheS), found in Escherichia coli O6:H1 (strain CFT073 / ATCC 700928 / UPEC).